A 258-amino-acid chain; its full sequence is Acetylglutamate kinase (258 aa).

Substrate-binding positions include 44–45 (GG), R66, and N158. ATP is bound by residues 181-186 (DVSGIL) and 209-211 (IIT).

Belongs to the acetylglutamate kinase family. ArgB subfamily. In terms of assembly, homodimer.

The protein localises to the cytoplasm. It carries out the reaction N-acetyl-L-glutamate + ATP = N-acetyl-L-glutamyl 5-phosphate + ADP. It participates in amino-acid biosynthesis; L-arginine biosynthesis; N(2)-acetyl-L-ornithine from L-glutamate: step 2/4. Catalyzes the ATP-dependent phosphorylation of N-acetyl-L-glutamate. The polypeptide is Acetylglutamate kinase (Shigella dysenteriae serotype 1 (strain Sd197)).